The sequence spans 227 residues: uncharacterized protein (227 aa).

An N-terminal signal peptide occupies residues 1–23; the sequence is MKKRFSLIMMTGLLFGLTSPAFA. The 192-residue stretch at 36–227 folds into the VWFA domain; that stretch reads NVAVLLDASG…FTQQSLMLSK (192 aa).

The protein to B.subtilis YwmD.

This is an uncharacterized protein from Bacillus subtilis (strain 168).